The chain runs to 301 residues: tRNA dimethylallyltransferase (301 aa).

Residue 8–15 (GATGTGKS) coordinates ATP. 10 to 15 (TGTGKS) provides a ligand contact to substrate. An interaction with substrate tRNA region spans residues 33–36 (DSMQ).

This sequence belongs to the IPP transferase family. As to quaternary structure, monomer. Mg(2+) serves as cofactor.

The enzyme catalyses adenosine(37) in tRNA + dimethylallyl diphosphate = N(6)-dimethylallyladenosine(37) in tRNA + diphosphate. Its function is as follows. Catalyzes the transfer of a dimethylallyl group onto the adenine at position 37 in tRNAs that read codons beginning with uridine, leading to the formation of N6-(dimethylallyl)adenosine (i(6)A). In Tropheryma whipplei (strain Twist) (Whipple's bacillus), this protein is tRNA dimethylallyltransferase.